We begin with the raw amino-acid sequence, 525 residues long: Probable protein kinase UbiB (525 aa).

Residues 118–500 (DFERVPVASA…QKRTNRLLQG (383 aa)) enclose the Protein kinase domain. ATP contacts are provided by residues 124–132 (VASASIAQV) and K150. D285 (proton acceptor) is an active-site residue. Residues 501 to 521 (LLLFGVAVGVGAALARVFLAL) traverse the membrane as a helical segment.

The protein belongs to the ABC1 family. UbiB subfamily.

It localises to the cell inner membrane. It functions in the pathway cofactor biosynthesis; ubiquinone biosynthesis [regulation]. Functionally, is probably a protein kinase regulator of UbiI activity which is involved in aerobic coenzyme Q (ubiquinone) biosynthesis. The protein is Probable protein kinase UbiB of Paraburkholderia xenovorans (strain LB400).